A 318-amino-acid chain; its full sequence is Transaldolase (318 aa).

Lysine 132 (schiff-base intermediate with substrate) is an active-site residue.

Belongs to the transaldolase family. Type 1 subfamily. In terms of assembly, homodimer.

It is found in the cytoplasm. The enzyme catalyses D-sedoheptulose 7-phosphate + D-glyceraldehyde 3-phosphate = D-erythrose 4-phosphate + beta-D-fructose 6-phosphate. It participates in carbohydrate degradation; pentose phosphate pathway; D-glyceraldehyde 3-phosphate and beta-D-fructose 6-phosphate from D-ribose 5-phosphate and D-xylulose 5-phosphate (non-oxidative stage): step 2/3. Functionally, transaldolase is important for the balance of metabolites in the pentose-phosphate pathway. This is Transaldolase from Allorhizobium ampelinum (strain ATCC BAA-846 / DSM 112012 / S4) (Agrobacterium vitis (strain S4)).